The chain runs to 106 residues: Putative double-stranded DNA mimic protein VCM66_1163 (106 aa).

This sequence belongs to the putative dsDNA mimic protein family.

In terms of biological role, may act as a double-stranded DNA (dsDNA) mimic. Probably regulates the activity of a dsDNA-binding protein. The sequence is that of Putative double-stranded DNA mimic protein VCM66_1163 from Vibrio cholerae serotype O1 (strain M66-2).